A 354-amino-acid chain; its full sequence is Bacteriochlorophyll a protein (354 aa).

Bacteriochlorophyll a-binding residues include His-99, His-134, His-278, His-285, and His-286.

In terms of assembly, homotrimer. Each subunit contains 7 molecules of bacteriochlorophyll a.

Its function is as follows. Intermediary in the transfer of excitation energy from the chlorophyll to the reaction centers. In Chlorobaculum thiosulfatiphilum (Chlorobium limicola f.sp. thiosulfatophilum), this protein is Bacteriochlorophyll a protein (fmoA).